The primary structure comprises 222 residues: 3-demethoxyubiquinol 3-hydroxylase (222 aa).

6 residues coordinate Fe cation: Glu-71, Glu-101, His-104, Glu-153, Glu-185, and His-188.

The protein belongs to the COQ7 family. Requires Fe cation as cofactor.

The protein localises to the cell membrane. It catalyses the reaction a 5-methoxy-2-methyl-3-(all-trans-polyprenyl)benzene-1,4-diol + AH2 + O2 = a 3-demethylubiquinol + A + H2O. Its pathway is cofactor biosynthesis; ubiquinone biosynthesis. Its function is as follows. Catalyzes the hydroxylation of 2-nonaprenyl-3-methyl-6-methoxy-1,4-benzoquinol during ubiquinone biosynthesis. This is 3-demethoxyubiquinol 3-hydroxylase from Bordetella pertussis (strain Tohama I / ATCC BAA-589 / NCTC 13251).